Consider the following 326-residue polypeptide: Putative UPF0725 protein At1g28500 (326 aa).

Positions 301 to 320 are enriched in basic and acidic residues; sequence KDTEQRSKTRQSEEKVESSQ. The interval 301–326 is disordered; that stretch reads KDTEQRSKTRQSEEKVESSQKRSRLC.

The protein belongs to the UPF0725 (EMB2204) family.

The protein is Putative UPF0725 protein At1g28500 of Arabidopsis thaliana (Mouse-ear cress).